The primary structure comprises 614 residues: Numb-like protein (614 aa).

Disordered regions lie at residues 1 to 68 (MSRS…QWQA), 223 to 283 (GSFR…PVAA), 371 to 420 (FASA…LEEV), 448 to 468 (QQQQATSVPPMPTMAPTLQPF), and 539 to 614 (LGKA…EIEL). Residues 74–223 (RKGTCSFPVR…ASRTSFAREG (150 aa)) enclose the PID domain. Phosphoserine is present on residues serine 224 and serine 228. Over residues 233–245 (PAEREAGDKKKAE) the composition is skewed to basic and acidic residues. The segment covering 246-260 (AAAAPAVAPGPAQPG) has biased composition (low complexity). Serine 263 bears the Phosphoserine mark. Phosphothreonine is present on threonine 279. Residues 371 to 390 (FASAGAPVPGPPSATTGTSA) show a composition bias toward low complexity. Basic and acidic residues predominate over residues 409–418 (TPSEAERWLE). Residue serine 411 is modified to Phosphoserine. The segment covering 563–578 (NGAPWPPEPAPAPAPE) has biased composition (pro residues).

In terms of assembly, associates with EPS15 and NOTCH1. Interacts (via PTB domain) with MAP3K7IP2 (via C-terminal). Interacts (via C-terminal) with TRAF6 (via TRAF domains).

It localises to the cytoplasm. Plays a role in the process of neurogenesis. Required throughout embryonic neurogenesis to maintain neural progenitor cells, also called radial glial cells (RGCs), by allowing their daughter cells to choose progenitor over neuronal cell fate. Not required for the proliferation of neural progenitor cells before the onset of embryonic neurogenesis. Also required postnatally in the subventricular zone (SVZ) neurogenesis by regulating SVZ neuroblasts survival and ependymal wall integrity. Negative regulator of NF-kappa-B signaling pathway. The inhibition of NF-kappa-B activation is mediated at least in part, by preventing MAP3K7IP2 to interact with polyubiquitin chains of TRAF6 and RIPK1 and by stimulating the 'Lys-48'-linked polyubiquitination and degradation of TRAF6 in cortical neurons. This is Numb-like protein (Numbl) from Rattus norvegicus (Rat).